Here is a 429-residue protein sequence, read N- to C-terminus: MKKQRNLRSMAAQAIEQVVEQGQSLSNILPPLQQKVSDKDKALLQELCFGVLRTLSQLDWLINKLMARPMTGKQRTVHYLIMVGLYQLLYTRIPPHAALAETVEGAVAIKRPQLKGLINGVLRQFQRQQDELLAEFNASDARYLHPSWLLKRLQKAYPEQWQSIVEANNQRPPMWLRVNRTHHSRDSWLALLDEAGMKGFPHADYPDAVQLETPAPVHALPGFEEGWVTVQDASAQGCMTWLAPQNGEHILDLCAAPGGKTTHILEVAPEAQVLAVDIDEQRLSRVYDNLKRLGMKATVKQGDGRYPSQWCGEQQFDRILLDAPCSATGVIRRHPDIKWLRRDRDIPELAQLQSEILDAIWSHLKSGGTLVYATCSMLPEENSLQIKAFLQRTADAELCETGTPEQPGKQNLPGAEEGDGFFYAKLIKK.

S-adenosyl-L-methionine contacts are provided by residues 254–260 (CAAPGGK), Asp277, Asp303, and Asp322. Cys375 functions as the Nucleophile in the catalytic mechanism.

The protein belongs to the class I-like SAM-binding methyltransferase superfamily. RsmB/NOP family.

The protein resides in the cytoplasm. The catalysed reaction is cytidine(967) in 16S rRNA + S-adenosyl-L-methionine = 5-methylcytidine(967) in 16S rRNA + S-adenosyl-L-homocysteine + H(+). In terms of biological role, specifically methylates the cytosine at position 967 (m5C967) of 16S rRNA. The polypeptide is Ribosomal RNA small subunit methyltransferase B (Escherichia coli (strain UTI89 / UPEC)).